A 388-amino-acid polypeptide reads, in one-letter code: Succinate--CoA ligase [ADP-forming] subunit beta (388 aa).

Residues 9 to 244 enclose the ATP-grasp domain; that stretch reads KEIFRSMGVA…LEEEDPKEIE (236 aa). ATP contacts are provided by residues lysine 46, 53 to 55, glutamate 99, cysteine 102, and glutamate 107; that span reads GRG. Asparagine 199 and aspartate 213 together coordinate Mg(2+). Residues asparagine 264 and 321–323 each bind substrate; that span reads GIM.

The protein belongs to the succinate/malate CoA ligase beta subunit family. As to quaternary structure, heterotetramer of two alpha and two beta subunits. Requires Mg(2+) as cofactor.

It catalyses the reaction succinate + ATP + CoA = succinyl-CoA + ADP + phosphate. The catalysed reaction is GTP + succinate + CoA = succinyl-CoA + GDP + phosphate. It participates in carbohydrate metabolism; tricarboxylic acid cycle; succinate from succinyl-CoA (ligase route): step 1/1. Its function is as follows. Succinyl-CoA synthetase functions in the citric acid cycle (TCA), coupling the hydrolysis of succinyl-CoA to the synthesis of either ATP or GTP and thus represents the only step of substrate-level phosphorylation in the TCA. The beta subunit provides nucleotide specificity of the enzyme and binds the substrate succinate, while the binding sites for coenzyme A and phosphate are found in the alpha subunit. The chain is Succinate--CoA ligase [ADP-forming] subunit beta from Staphylococcus aureus (strain bovine RF122 / ET3-1).